The sequence spans 357 residues: UDP-N-acetylglucosamine--N-acetylmuramyl-(pentapeptide) pyrophosphoryl-undecaprenol N-acetylglucosamine transferase (357 aa).

UDP-N-acetyl-alpha-D-glucosamine is bound by residues 13–15 (TGG), N125, R161, S189, I243, and Q288.

This sequence belongs to the glycosyltransferase 28 family. MurG subfamily.

Its subcellular location is the cell inner membrane. It catalyses the reaction di-trans,octa-cis-undecaprenyl diphospho-N-acetyl-alpha-D-muramoyl-L-alanyl-D-glutamyl-meso-2,6-diaminopimeloyl-D-alanyl-D-alanine + UDP-N-acetyl-alpha-D-glucosamine = di-trans,octa-cis-undecaprenyl diphospho-[N-acetyl-alpha-D-glucosaminyl-(1-&gt;4)]-N-acetyl-alpha-D-muramoyl-L-alanyl-D-glutamyl-meso-2,6-diaminopimeloyl-D-alanyl-D-alanine + UDP + H(+). It participates in cell wall biogenesis; peptidoglycan biosynthesis. Functionally, cell wall formation. Catalyzes the transfer of a GlcNAc subunit on undecaprenyl-pyrophosphoryl-MurNAc-pentapeptide (lipid intermediate I) to form undecaprenyl-pyrophosphoryl-MurNAc-(pentapeptide)GlcNAc (lipid intermediate II). This chain is UDP-N-acetylglucosamine--N-acetylmuramyl-(pentapeptide) pyrophosphoryl-undecaprenol N-acetylglucosamine transferase, found in Polynucleobacter asymbioticus (strain DSM 18221 / CIP 109841 / QLW-P1DMWA-1) (Polynucleobacter necessarius subsp. asymbioticus).